A 197-amino-acid chain; its full sequence is Peptide deformylase (197 aa).

The Fe cation site is built by Cys106 and His148. Glu149 is an active-site residue. Residue His152 coordinates Fe cation.

Belongs to the polypeptide deformylase family. Requires Fe(2+) as cofactor.

It catalyses the reaction N-terminal N-formyl-L-methionyl-[peptide] + H2O = N-terminal L-methionyl-[peptide] + formate. Removes the formyl group from the N-terminal Met of newly synthesized proteins. Requires at least a dipeptide for an efficient rate of reaction. N-terminal L-methionine is a prerequisite for activity but the enzyme has broad specificity at other positions. The sequence is that of Peptide deformylase from Mycobacterium leprae (strain TN).